The primary structure comprises 1368 residues: Kinesin-like protein KIF24 (1368 aa).

One can recognise an SAM domain in the interval 1–64 (MASWLYECLC…FQLIKIIKIM (64 aa)). A disordered region spans residues 89 to 112 (ELRSGPRRQLNFDSPADNKDRNAS). Ser-102 and Ser-112 each carry phosphoserine. The Kinesin motor domain maps to 223 to 546 (KIRVCVRKRP…LRYADRVKEL (324 aa)). 313–320 (GQTGAGKT) is a binding site for ATP. At Ser-478 the chain carries Phosphoserine. An interaction with MPHOSPH9 region spans residues 478–709 (SLLALKECIR…STKCKKVQTV (232 aa)). Residues 557–576 (TSRNRTSGNSSPKRIQSSPG) show a composition bias toward polar residues. 2 disordered regions span residues 557–584 (TSRN…DKCS) and 602–639 (GSTR…SPSQ). The residue at position 584 (Ser-584) is a Phosphoserine. Thr-621 carries the post-translational modification Phosphothreonine; by NEK2. Residue Ser-622 is modified to Phosphoserine; by NEK2. Ser-646 carries the post-translational modification Phosphoserine. 5 disordered regions span residues 651–670 (TVRS…PLCS), 729–753 (HRAE…WTNI), 792–849 (QYRP…NTLE), 864–938 (GPEK…LAEK), and 952–984 (RGGG…EEDG). The span at 819–830 (QVEELDDSDFSE) shows a compositional bias: acidic residues. Phosphoserine occurs at positions 826 and 829. Polar residues-rich tracts occupy residues 839–849 (QRATKQRNTLE) and 871–881 (ERQQSLFSSPR). The span at 882 to 906 (TGDKKDLTKSWVDSRDPINHRRAAL) shows a compositional bias: basic and acidic residues. Ser-1012 is subject to Phosphoserine. 2 disordered regions span residues 1054–1073 (MSLL…QLVQ) and 1086–1148 (GGPV…SREA). Residues 1106-1119 (SSATRHLWLSSSPP) show a composition bias toward polar residues. Residues 1138–1148 (HPADKLPSREA) are compositionally biased toward basic and acidic residues.

Belongs to the TRAFAC class myosin-kinesin ATPase superfamily. Kinesin family. As to quaternary structure, interacts with CCP110, CEP97, TALPID3. Interacts with MPHOSPH9.

The protein localises to the cytoplasm. It localises to the cytoskeleton. Its subcellular location is the microtubule organizing center. The protein resides in the centrosome. It is found in the centriole. Microtubule-dependent motor protein that acts as a negative regulator of ciliogenesis by mediating recruitment of CCP110 to mother centriole in cycling cells, leading to restrict nucleation of cilia at centrioles. Mediates depolymerization of microtubules of centriolar origin, possibly to suppress aberrant cilia formation. Following activation by NEK2 involved in disassembly of primary cilium during G2/M phase but does not disassemble fully formed ciliary axonemes. As cilium assembly and disassembly is proposed to coexist in a dynamic equilibrium may suppress nascent cilium assembly and, potentially, ciliar re-assembly in cells that have already disassembled their cilia ensuring the completion of cilium removal in the later stages of the cell cycle. Plays an important role in recruiting MPHOSPH9, a negative regulator of cilia formation to the distal end of mother centriole. This chain is Kinesin-like protein KIF24 (KIF24), found in Homo sapiens (Human).